The following is a 208-amino-acid chain: TM2 domain-containing protein 1 (208 aa).

The signal sequence occupies residues Met-1 to Ala-37. Residues Ser-38–Ser-129 lie on the Extracellular side of the membrane. N-linked (GlcNAc...) asparagine glycosylation is found at Asn-73, Asn-76, and Asn-97. One can recognise a TM2 domain in the interval Gly-119–Ile-167. A helical transmembrane segment spans residues Leu-130–Leu-150. Over Lys-151–Thr-154 the chain is Cytoplasmic. Residues Val-155–Gly-175 traverse the membrane as a helical segment. The Extracellular portion of the chain corresponds to Pro-176 to Pro-208. Asn-198 carries N-linked (GlcNAc...) asparagine glycosylation.

This sequence belongs to the TM2 family. As to quaternary structure, interacts with APP beta-APP42 (amyloid-beta protein 42). N-glycosylated.

It localises to the membrane. Functionally, may participate in amyloid-beta-induced apoptosis via its interaction with beta-APP42. This Mus musculus (Mouse) protein is TM2 domain-containing protein 1 (Tm2d1).